A 429-amino-acid polypeptide reads, in one-letter code: Adenylosuccinate synthetase (429 aa).

Residues 12 to 18 and 40 to 42 each bind GTP; these read GDEGKGK and GHT. Asp-13 functions as the Proton acceptor in the catalytic mechanism. 2 residues coordinate Mg(2+): Asp-13 and Gly-40. Residues 13–16, 38–41, Thr-128, Arg-142, Gln-224, Thr-239, and Arg-303 contribute to the IMP site; these read DEGK and NAGH. His-41 acts as the Proton donor in catalysis. 299 to 305 is a binding site for substrate; the sequence is VTTGRPR. GTP-binding positions include Arg-305, 331–333, and 413–415; these read LLD and SVG.

It belongs to the adenylosuccinate synthetase family. Homodimer. Requires Mg(2+) as cofactor.

Its subcellular location is the cytoplasm. The catalysed reaction is IMP + L-aspartate + GTP = N(6)-(1,2-dicarboxyethyl)-AMP + GDP + phosphate + 2 H(+). It functions in the pathway purine metabolism; AMP biosynthesis via de novo pathway; AMP from IMP: step 1/2. Its function is as follows. Plays an important role in the de novo pathway of purine nucleotide biosynthesis. Catalyzes the first committed step in the biosynthesis of AMP from IMP. In Clostridioides difficile (strain 630) (Peptoclostridium difficile), this protein is Adenylosuccinate synthetase.